A 278-amino-acid chain; its full sequence is Urease accessory protein UreD (278 aa).

It belongs to the UreD family. UreD, UreF and UreG form a complex that acts as a GTP-hydrolysis-dependent molecular chaperone, activating the urease apoprotein by helping to assemble the nickel containing metallocenter of UreC. The UreE protein probably delivers the nickel.

Its subcellular location is the cytoplasm. Functionally, required for maturation of urease via the functional incorporation of the urease nickel metallocenter. The chain is Urease accessory protein UreD from Pseudomonas putida (strain ATCC 700007 / DSM 6899 / JCM 31910 / BCRC 17059 / LMG 24140 / F1).